The primary structure comprises 147 residues: uncharacterized protein (147 aa).

This sequence to M.pneumoniae MPN_465.

This is an uncharacterized protein from Mycoplasma pneumoniae (strain ATCC 29342 / M129 / Subtype 1) (Mycoplasmoides pneumoniae).